We begin with the raw amino-acid sequence, 86 residues long: Probable weak neurotoxin NNAM2I (86 aa).

The first 21 residues, 1-21 (MKTLPLTLVVVTIVCLDLGYT), serve as a signal peptide directing secretion. 5 disulfides stabilise this stretch: Cys-24–Cys-45, Cys-27–Cys-32, Cys-38–Cys-63, Cys-67–Cys-78, and Cys-79–Cys-84.

It belongs to the three-finger toxin family. Ancestral subfamily. Orphan group II sub-subfamily. In terms of tissue distribution, expressed by the venom gland.

Its subcellular location is the secreted. In terms of biological role, binds with low affinity to muscular (alpha-1-beta-1-delta-epsilon/CHRNA1-CHRNB1-CHRND-CHRNE) and very low affinity to neuronal (alpha-7/CHRNA7) nicotinic acetylcholine receptor (nAChR). In Naja atra (Chinese cobra), this protein is Probable weak neurotoxin NNAM2I.